The chain runs to 681 residues: DNA ligase (681 aa).

NAD(+)-binding positions include 42–46, 91–92, and Glu-120; these read DAEYD and SL. Lys-122 serves as the catalytic N6-AMP-lysine intermediate. Residues Arg-143, Glu-180, Lys-302, and Lys-326 each contribute to the NAD(+) site. 4 residues coordinate Zn(2+): Cys-420, Cys-423, Cys-438, and Cys-444. The BRCT domain occupies 603 to 681; it reads ADAQPLLGQT…EAGLIELIGL (79 aa).

The protein belongs to the NAD-dependent DNA ligase family. LigA subfamily. Requires Mg(2+) as cofactor. Mn(2+) is required as a cofactor.

It carries out the reaction NAD(+) + (deoxyribonucleotide)n-3'-hydroxyl + 5'-phospho-(deoxyribonucleotide)m = (deoxyribonucleotide)n+m + AMP + beta-nicotinamide D-nucleotide.. DNA ligase that catalyzes the formation of phosphodiester linkages between 5'-phosphoryl and 3'-hydroxyl groups in double-stranded DNA using NAD as a coenzyme and as the energy source for the reaction. It is essential for DNA replication and repair of damaged DNA. In Shewanella amazonensis (strain ATCC BAA-1098 / SB2B), this protein is DNA ligase.